Here is a 426-residue protein sequence, read N- to C-terminus: Glutamate-1-semialdehyde 2,1-aminomutase (426 aa).

Residue lysine 264 is modified to N6-(pyridoxal phosphate)lysine.

This sequence belongs to the class-III pyridoxal-phosphate-dependent aminotransferase family. HemL subfamily. Requires pyridoxal 5'-phosphate as cofactor.

Its subcellular location is the cytoplasm. It carries out the reaction (S)-4-amino-5-oxopentanoate = 5-aminolevulinate. It functions in the pathway porphyrin-containing compound metabolism; protoporphyrin-IX biosynthesis; 5-aminolevulinate from L-glutamyl-tRNA(Glu): step 2/2. The protein is Glutamate-1-semialdehyde 2,1-aminomutase of Methanocella arvoryzae (strain DSM 22066 / NBRC 105507 / MRE50).